The primary structure comprises 526 residues: Peptide chain release factor 3 (526 aa).

The 269-residue stretch at 9–277 folds into the tr-type G domain; the sequence is DKRRTFAIIS…GIVEWAPKPQ (269 aa). Residues 18 to 25, 86 to 90, and 140 to 143 contribute to the GTP site; these read SHPDAGKT, DTPGH, and NKLD.

This sequence belongs to the TRAFAC class translation factor GTPase superfamily. Classic translation factor GTPase family. PrfC subfamily.

It localises to the cytoplasm. In terms of biological role, increases the formation of ribosomal termination complexes and stimulates activities of RF-1 and RF-2. It binds guanine nucleotides and has strong preference for UGA stop codons. It may interact directly with the ribosome. The stimulation of RF-1 and RF-2 is significantly reduced by GTP and GDP, but not by GMP. This is Peptide chain release factor 3 from Shewanella sediminis (strain HAW-EB3).